The primary structure comprises 255 residues: NAD-dependent protein deacylase (255 aa).

The Deacetylase sirtuin-type domain maps to 1–253 (MIEEAPRIIA…VKVKRCLENK (253 aa)). Residue 20–39 (GAGVSAESGIPTFRDRGGLW) participates in NAD(+) binding. Substrate is bound by residues tyrosine 64 and arginine 67. 98 to 101 (QNID) lines the NAD(+) pocket. Residue histidine 116 is the Proton acceptor of the active site. Zn(2+)-binding residues include cysteine 124, cysteine 127, cysteine 151, and cysteine 154. NAD(+) contacts are provided by residues 191-193 (GTS), 217-219 (NTK), and alanine 235.

The protein belongs to the sirtuin family. Class III subfamily. Requires Zn(2+) as cofactor.

Its subcellular location is the cytoplasm. The enzyme catalyses N(6)-acetyl-L-lysyl-[protein] + NAD(+) + H2O = 2''-O-acetyl-ADP-D-ribose + nicotinamide + L-lysyl-[protein]. It catalyses the reaction N(6)-succinyl-L-lysyl-[protein] + NAD(+) + H2O = 2''-O-succinyl-ADP-D-ribose + nicotinamide + L-lysyl-[protein]. In terms of biological role, NAD-dependent lysine deacetylase and desuccinylase that specifically removes acetyl and succinyl groups on target proteins. Modulates the activities of several proteins which are inactive in their acylated form. Deacetylates the N-terminal lysine residue of Alba, the major archaeal chromatin protein and that, in turn, increases Alba's DNA binding affinity, thereby repressing transcription. The polypeptide is NAD-dependent protein deacylase (Thermococcus sibiricus (strain DSM 12597 / MM 739)).